The primary structure comprises 409 residues: DNA polymerase IV 2 (409 aa).

The UmuC domain maps to 5–190 (IFMVDMESFF…LPIECLYGVG (186 aa)). Positions 9 and 105 each coordinate Mg(2+). Residue E106 is part of the active site.

This sequence belongs to the DNA polymerase type-Y family. In terms of assembly, monomer. The cofactor is Mg(2+).

The protein resides in the cytoplasm. The catalysed reaction is DNA(n) + a 2'-deoxyribonucleoside 5'-triphosphate = DNA(n+1) + diphosphate. Poorly processive, error-prone DNA polymerase involved in untargeted mutagenesis. Copies undamaged DNA at stalled replication forks, which arise in vivo from mismatched or misaligned primer ends. These misaligned primers can be extended by PolIV. Exhibits no 3'-5' exonuclease (proofreading) activity. May be involved in translesional synthesis, in conjunction with the beta clamp from PolIII. This is DNA polymerase IV 2 (dinB2) from Halalkalibacterium halodurans (strain ATCC BAA-125 / DSM 18197 / FERM 7344 / JCM 9153 / C-125) (Bacillus halodurans).